A 390-amino-acid chain; its full sequence is NADH-quinone oxidoreductase subunit D (390 aa).

This sequence belongs to the complex I 49 kDa subunit family. NDH-1 is composed of 14 different subunits. Subunits NuoB, C, D, E, F, and G constitute the peripheral sector of the complex.

The protein resides in the cell membrane. It carries out the reaction a quinone + NADH + 5 H(+)(in) = a quinol + NAD(+) + 4 H(+)(out). NDH-1 shuttles electrons from NADH, via FMN and iron-sulfur (Fe-S) centers, to quinones in the respiratory chain. The immediate electron acceptor for the enzyme in this species is believed to be ubiquinone. Couples the redox reaction to proton translocation (for every two electrons transferred, four hydrogen ions are translocated across the cytoplasmic membrane), and thus conserves the redox energy in a proton gradient. The protein is NADH-quinone oxidoreductase subunit D of Wolbachia sp. subsp. Brugia malayi (strain TRS).